The primary structure comprises 367 residues: Avirulence protein ATR5 (367 aa).

The N-terminal stretch at Met1–Ala16 is a signal peptide. Asn20 carries N-linked (GlcNAc...) asparagine glycosylation. The segment at Asn33 to Thr65 is disordered. The segment covering Arg54–Thr65 has biased composition (basic and acidic residues). Residues Thr61 to Arg64 carry the dEER motif.

Belongs to the RxLR effector family.

The protein resides in the secreted. Its subcellular location is the host cell. Functionally, secreted effector that acts as an elicitor of hypersensitive response (HR) specifically on plants carrying defense protein RPP5. The chain is Avirulence protein ATR5 from Hyaloperonospora arabidopsidis (strain Emoy2) (Downy mildew agent).